The sequence spans 279 residues: Movement protein (279 aa).

The protein belongs to the cucumovirus movement protein family.

It is found in the host cell junction. The protein resides in the host plasmodesma. In terms of biological role, transports viral genome to neighboring plant cells directly through plasmosdesmata, without any budding. The movement protein allows efficient cell to cell propagation, by bypassing the host cell wall barrier. Acts by forming a tubular structure at the host plasmodesmata, enlarging it enough to allow free passage of virion capsids. The protein is Movement protein of Cucumber mosaic virus (strain As) (CMV).